A 497-amino-acid chain; its full sequence is Galactose-1-phosphate uridylyltransferase (497 aa).

Belongs to the galactose-1-phosphate uridylyltransferase type 2 family.

Its subcellular location is the cytoplasm. The catalysed reaction is alpha-D-galactose 1-phosphate + UDP-alpha-D-glucose = alpha-D-glucose 1-phosphate + UDP-alpha-D-galactose. It functions in the pathway carbohydrate metabolism; galactose metabolism. This Clostridium acetobutylicum (strain ATCC 824 / DSM 792 / JCM 1419 / IAM 19013 / LMG 5710 / NBRC 13948 / NRRL B-527 / VKM B-1787 / 2291 / W) protein is Galactose-1-phosphate uridylyltransferase.